The following is a 104-amino-acid chain: Protamine-2 (104 aa).

Phosphoserine occurs at positions 8 and 10. The segment at 23–104 is disordered; the sequence is WQEQGRNGQE…SRRRRRCRRY (82 aa). A compositionally biased stretch (low complexity) spans 24–35; the sequence is QEQGRNGQEEQG. Ser-37 is subject to Phosphoserine. The segment covering 54–104 has biased composition (basic residues); sequence YRRRRCSRRRRYRIHRRRSRSCRRRRRRSCRYRRRPRRGCRSRRRRRCRRY.

This sequence belongs to the protamine P2 family. As to quaternary structure, interacts with TDRP. Post-translationally, proteolytic processing into mature chains is required for histone eviction during spermatogenesis. Transition proteins (TNP1 and TNP2) are required for processing. In terms of tissue distribution, testis.

It localises to the nucleus. It is found in the chromosome. Functionally, protamines substitute for histones in the chromatin of sperm during the haploid phase of spermatogenesis. They compact sperm DNA into a highly condensed, stable and inactive complex. The sequence is that of Protamine-2 (PRM2) from Callithrix jacchus (White-tufted-ear marmoset).